A 426-amino-acid chain; its full sequence is Methylamine dehydrogenase heavy chain (426 aa).

An N-terminal signal peptide occupies residues 1 to 31 (MASARESTPRYLTLIGATLACSALALGAAQA). Positions 32–64 (QTEPAEPEAPAETAAADAAGQTEGQRGAAEAAA) are disordered. Cys221 and Cys236 form a disulfide bridge.

Belongs to the aromatic amine dehydrogenase heavy chain family. As to quaternary structure, tetramer of two light and two heavy chains.

The protein resides in the periplasm. It catalyses the reaction 2 oxidized [amicyanin] + methylamine + H2O = 2 reduced [amicyanin] + formaldehyde + NH4(+) + 2 H(+). Its function is as follows. Methylamine dehydrogenase carries out the oxidation of methylamine. Electrons are passed from methylamine dehydrogenase to amicyanin. The chain is Methylamine dehydrogenase heavy chain (mauB) from Paracoccus versutus (Thiobacillus versutus).